A 402-amino-acid chain; its full sequence is Type II NADH:quinone oxidoreductase (402 aa).

FAD contacts are provided by residues 12 to 16, 39 to 40, and valine 83; these read GAGYA and NK. The active site involves glutamate 172. FAD contacts are provided by residues aspartate 302, 319-320, and lysine 379; that span reads AQ.

The protein belongs to the NADH dehydrogenase family. FAD is required as a cofactor.

It is found in the cell membrane. It carries out the reaction a quinone + NADH + H(+) = a quinol + NAD(+). Alternative, nonproton pumping NADH:quinone oxidoreductase that delivers electrons to the respiratory chain by oxidation of NADH and reduction of quinones, and contributes to the regeneration of NAD(+). The sequence is that of Type II NADH:quinone oxidoreductase from Staphylococcus epidermidis (strain ATCC 12228 / FDA PCI 1200).